Reading from the N-terminus, the 193-residue chain is AP-3 complex subunit sigma-2 (193 aa).

Belongs to the adaptor complexes small subunit family. Adaptor protein complex 3 (AP-3) is a heterotetramer composed of two large adaptins (delta-type subunit AP3D1 and beta-type subunit AP3B1 or AP3B2), a medium adaptin (mu-type subunit AP3M1 or AP3M2) and a small adaptin (sigma-type subunit APS1 or AP3S2). Interacts with AGAP1. AP-3 associates with the BLOC-1 complex. In terms of tissue distribution, present in all adult tissues examined.

It is found in the golgi apparatus. It localises to the cytoplasmic vesicle membrane. In terms of biological role, part of the AP-3 complex, an adaptor-related complex which is not clathrin-associated. The complex is associated with the Golgi region as well as more peripheral structures. It facilitates the budding of vesicles from the Golgi membrane and may be directly involved in trafficking to lysosomes. In concert with the BLOC-1 complex, AP-3 is required to target cargos into vesicles assembled at cell bodies for delivery into neurites and nerve terminals. The chain is AP-3 complex subunit sigma-2 (AP3S2) from Homo sapiens (Human).